Consider the following 502-residue polypeptide: ATP synthase subunit alpha (502 aa).

A disordered region spans residues 115 to 137 (VDGLGPVETTETRPIESPAPGVM). ATP is bound at residue 169 to 176 (GDRQTGKT).

This sequence belongs to the ATPase alpha/beta chains family. F-type ATPases have 2 components, CF(1) - the catalytic core - and CF(0) - the membrane proton channel. CF(1) has five subunits: alpha(3), beta(3), gamma(1), delta(1), epsilon(1). CF(0) has three main subunits: a(1), b(2) and c(9-12). The alpha and beta chains form an alternating ring which encloses part of the gamma chain. CF(1) is attached to CF(0) by a central stalk formed by the gamma and epsilon chains, while a peripheral stalk is formed by the delta and b chains.

It is found in the cell membrane. The enzyme catalyses ATP + H2O + 4 H(+)(in) = ADP + phosphate + 5 H(+)(out). In terms of biological role, produces ATP from ADP in the presence of a proton gradient across the membrane. The alpha chain is a regulatory subunit. The sequence is that of ATP synthase subunit alpha from Geobacillus kaustophilus (strain HTA426).